The sequence spans 178 residues: Hypoxanthine phosphoribosyltransferase (178 aa).

The diphosphate site is built by R43 and G44. Residue E99 coordinates GMP. E99 provides a ligand contact to IMP. The Mg(2+) site is built by E99 and D100. D103 acts as the Proton acceptor in catalysis. Residues 103–108 (DSGNTL), K131, and D159 each bind GMP. IMP-binding positions include 103–108 (DSGNTL) and K131. R165 serves as a coordination point for diphosphate.

It belongs to the purine/pyrimidine phosphoribosyltransferase family. Homotetramer. Mg(2+) serves as cofactor.

It localises to the cytoplasm. It carries out the reaction IMP + diphosphate = hypoxanthine + 5-phospho-alpha-D-ribose 1-diphosphate. It catalyses the reaction GMP + diphosphate = guanine + 5-phospho-alpha-D-ribose 1-diphosphate. The protein operates within purine metabolism; IMP biosynthesis via salvage pathway; IMP from hypoxanthine: step 1/1. Functionally, purine salvage pathway enzyme which catalyzes the transfer of the ribosyl-5-phosphate group from 5-phospho-alpha-D-ribose 1-diphosphate (PRPP) to the N9 position of hypoxanthine to yield IMP (inosine 5'-monophosphate). To a lesser extent, can also act on guanine leading to GMP, but shows a highly less efficient activity with xanthine. The protein is Hypoxanthine phosphoribosyltransferase (hpt) of Salmonella typhimurium (strain LT2 / SGSC1412 / ATCC 700720).